We begin with the raw amino-acid sequence, 402 residues long: AA9 family lytic polysaccharide monooxygenase E (402 aa).

A signal peptide spans 1–16 (MSRLVSFASLLAAVNA). Position 17 (His-17) interacts with Cu(2+). Disulfide bonds link Cys-72/Cys-194 and Cys-113/Cys-117. Asn-75 carries an N-linked (GlcNAc...) asparagine glycan. Residue His-102 coordinates Cu(2+). N-linked (GlcNAc...) asparagine glycosylation is present at Asn-154. Residues His-180 and Gln-189 each coordinate O2. Tyr-191 provides a ligand contact to Cu(2+). The CBM1 domain maps to 364 to 400 (GSNPLYAQCGGLNFKGASGCVAGATCKKMNPYYSQCV).

This sequence belongs to the polysaccharide monooxygenase AA9 family. Cu(2+) is required as a cofactor.

It localises to the secreted. It carries out the reaction [(1-&gt;4)-beta-D-glucosyl]n+m + reduced acceptor + O2 = 4-dehydro-beta-D-glucosyl-[(1-&gt;4)-beta-D-glucosyl]n-1 + [(1-&gt;4)-beta-D-glucosyl]m + acceptor + H2O.. Functionally, lytic polysaccharide monooxygenase (LPMO) that depolymerizes crystalline and amorphous polysaccharides via the oxidation of scissile alpha- or beta-(1-4)-glycosidic bonds, yielding C1 or C4 oxidation products. Catalysis by LPMOs requires the reduction of the active-site copper from Cu(II) to Cu(I) by a reducing agent and H(2)O(2) or O(2) as a cosubstrate. This Emericella nidulans (strain FGSC A4 / ATCC 38163 / CBS 112.46 / NRRL 194 / M139) (Aspergillus nidulans) protein is AA9 family lytic polysaccharide monooxygenase E.